The sequence spans 319 residues: Acetyl-coenzyme A carboxylase carboxyl transferase subunit alpha (319 aa).

A CoA carboxyltransferase C-terminal domain is found at 35-296 (DLDKEIEQLE…KATLLRQLED (262 aa)).

The protein belongs to the AccA family. In terms of assembly, acetyl-CoA carboxylase is a heterohexamer composed of biotin carboxyl carrier protein (AccB), biotin carboxylase (AccC) and two subunits each of ACCase subunit alpha (AccA) and ACCase subunit beta (AccD).

The protein resides in the cytoplasm. The enzyme catalyses N(6)-carboxybiotinyl-L-lysyl-[protein] + acetyl-CoA = N(6)-biotinyl-L-lysyl-[protein] + malonyl-CoA. The protein operates within lipid metabolism; malonyl-CoA biosynthesis; malonyl-CoA from acetyl-CoA: step 1/1. In terms of biological role, component of the acetyl coenzyme A carboxylase (ACC) complex. First, biotin carboxylase catalyzes the carboxylation of biotin on its carrier protein (BCCP) and then the CO(2) group is transferred by the carboxyltransferase to acetyl-CoA to form malonyl-CoA. This Vibrio parahaemolyticus serotype O3:K6 (strain RIMD 2210633) protein is Acetyl-coenzyme A carboxylase carboxyl transferase subunit alpha.